Consider the following 594-residue polypeptide: Protein CBFA2T2 (594 aa).

Position 24 is a phosphoserine (S24). K29 is covalently cross-linked (Glycyl lysine isopeptide (Lys-Gly) (interchain with G-Cter in SUMO2)). The segment at 48-96 (GGPRPVSFTPTALSNGINHSPPTLNGAPSPPQRFSNGPASSTSSALTNQ) is disordered. Polar residues-rich tracts occupy residues 55 to 70 (FTPT…SPPT) and 79 to 96 (QRFS…LTNQ). The interaction with PRDM14 stretch occupies residues 98 to 206 (LPATCGARQL…QHEHLLLNTS (109 aa)). The region spanning 104 to 199 (ARQLSKLKRF…TPSQYLAQHE (96 aa)) is the TAFH domain. Positions 220–257 (VHGNGKRPSPERRDENNFERDTVPPEPPAKRVCTISPA) are disordered. Residues 227-242 (PSPERRDENNFERDTV) are compositionally biased toward basic and acidic residues. At S255 the chain carries Phosphoserine. The tract at residues 322–368 (QDELVDHRLTEREWADEWKHLDHALNCIMEMVEKTRRSMAVLRRCQE) is nervy homology region 2 (NHR2). The segment at 388–416 (RKTGTELVSRQHSPGSTDSLSNDSQREFT) is disordered. The segment covering 393 to 410 (ELVSRQHSPGSTDSLSND) has biased composition (polar residues). S400 carries the post-translational modification Phosphoserine. The nervy homology region 3 (NHR3) stretch occupies residues 426–475 (VEFWKKTEEAVNKVKIQAMSEVQKAVAEAEQKAFEVIATERARMEQTIAD). Residue K440 forms a Glycyl lysine isopeptide (Lys-Gly) (interchain with G-Cter in SUMO2) linkage. The stretch at 442–482 (QAMSEVQKAVAEAEQKAFEVIATERARMEQTIADVKRQAAE) forms a coiled coil. 8 residues coordinate Zn(2+): C498, C501, C509, C512, C518, C522, H530, and C534. The MYND-type zinc finger occupies 498-534 (CWNCGRKASETCSGCNIARYCGSFCQHKDWERHHRLC). A disordered region spans residues 538-594 (LHGHSPHSQSRPLLPGGRGSARSADCSVPSPALDKTSATTSRSSTPASVTAIDANGL). S567 is subject to Phosphoserine. Residues 573–588 (TSATTSRSSTPASVTA) show a composition bias toward low complexity.

Belongs to the CBFA2T family. In terms of assembly, homooligomer. Homotetramerization is mediated by the NHR2 domain. Interacts with CBFA2T3/MTG16. Can interact with RUNX1T1/CBFA2T1. Heterotetramerization between members of the CBFA2T family is proposed. Interacts with RBP, GFI1, TCF4, PRDM14. Interacts with TAL1 and CBFA2T3/MTG16; the heteromer with CBFA2T3/MTG16 may function in repression of TAL1. In terms of tissue distribution, expressed in embryonic stem cells.

The protein localises to the nucleus. In terms of biological role, transcriptional corepressor which facilitates transcriptional repression via its association with DNA-binding transcription factors and recruitment of other corepressors and histone-modifying enzymes. Via association with PRDM14 is involved in regulation of embryonic stem cell (ESC) pluripotency. Involved in primordial germ cell (PCG) formation. Stabilizes PRDM14 and OCT4 on chromatin in a homooligomerization-dependent mannerCan repress the expression of MMP7 in a ZBTB33-dependent manner. Through heteromerization with CBFA2T3/MTG16 may be involved in regulation of the proliferation and the differentiation of erythroid progenitors by repressing the expression of TAL1 target genes. Required for the maintenance of the secretory cell lineage in the small intestine. Can inhibit Notch signaling probably by association with RBPJ and may be involved in GFI1-mediated Paneth cell differentiation. This Mus musculus (Mouse) protein is Protein CBFA2T2 (Cbfa2t2).